Here is a 113-residue protein sequence, read N- to C-terminus: Flagellar hook-basal body complex protein FliE (113 aa).

The protein belongs to the FliE family.

It localises to the bacterial flagellum basal body. The protein is Flagellar hook-basal body complex protein FliE of Rhizobium etli (strain ATCC 51251 / DSM 11541 / JCM 21823 / NBRC 15573 / CFN 42).